The following is a 387-amino-acid chain: V-set and immunoglobulin domain-containing protein 1 (387 aa).

A signal peptide spans 1–21 (MVFAFWKVFLILSCLAGQVSV). In terms of domain architecture, Ig-like V-type spans 22 to 132 (VQVTIPDGFV…DFLGQNQGIL (111 aa)). Over 22–232 (VQVTIPDGFV…EIDLTSSHPE (211 aa)) the chain is Extracellular. N-linked (GlcNAc...) asparagine glycans are attached at residues Asn-32 and Asn-38. A disulfide bond links Cys-43 and Cys-116. N-linked (GlcNAc...) asparagine glycans are attached at residues Asn-133, Asn-200, and Asn-219. The 88-residue stretch at 140–227 (PSKPLCSVQG…GNSSCEIDLT (88 aa)) folds into the Ig-like C2-type domain. Cys-161 and Cys-211 are oxidised to a cystine. Residues 233–253 (VGIIVGALIGSLVGAAIIISV) form a helical membrane-spanning segment. Over 254–387 (VCFARNKAKA…SEDEKGVVKA (134 aa)) the chain is Cytoplasmic. The interval 266 to 387 (KERNSKTIAE…SEDEKGVVKA (122 aa)) is disordered. A compositionally biased stretch (basic and acidic residues) spans 284-296 (PRGESEAMPREDA). A compositionally biased stretch (polar residues) spans 299 to 308 (LEVTLPSSIH). Residues 325–335 (TQEPAPEPAPG) show a composition bias toward pro residues. Residues 344 to 368 (LDIELELEPETQSELEPEPEPEPES) are compositionally biased toward acidic residues.

In terms of processing, highly N-glycosylated. Appears not to contain significant amounts of O-linked carbohydrates or sialic acid in its sugar moieties. Detected only in stomach mucosa and testis, and to a much lesser level in pancreas (at protein level). Detected in gastric cancers (31%), esophageal carcinomas (50%) and ovarian cancers (23%).

It localises to the membrane. The polypeptide is V-set and immunoglobulin domain-containing protein 1 (VSIG1) (Homo sapiens (Human)).